Consider the following 169-residue polypeptide: Transmembrane protein B169L (169 aa).

The next 2 membrane-spanning stretches (helical) occupy residues 28-48 (NPFIVALIITAVVLVVFFAIC) and 60-80 (TAIYVYICIVALLFLHYYVLN). Asparagine 88 is a glycosylation site (N-linked (GlcNAc...) asparagine; by host). Residues 107 to 169 (DEIIPPISPP…EVIMPSQYNN (63 aa)) form a disordered region. Over residues 140–154 (KPADSKPASSADSKP) the composition is skewed to low complexity.

It belongs to the asfivirus B169L family.

It localises to the host membrane. Its subcellular location is the virion. This chain is Transmembrane protein B169L, found in Ornithodoros (relapsing fever ticks).